A 306-amino-acid polypeptide reads, in one-letter code: uncharacterized protein (306 aa).

The protein to L.delbrueckii similar ORF in glnA 5'region.

This is an uncharacterized protein from Lactobacillus delbrueckii subsp. bulgaricus.